The following is a 407-amino-acid chain: Phosphopentomutase (407 aa).

Mn(2+) is bound by residues Asp10, Asp306, His311, Asp347, His348, and His359.

This sequence belongs to the phosphopentomutase family. It depends on Mn(2+) as a cofactor.

It is found in the cytoplasm. The enzyme catalyses 2-deoxy-alpha-D-ribose 1-phosphate = 2-deoxy-D-ribose 5-phosphate. The catalysed reaction is alpha-D-ribose 1-phosphate = D-ribose 5-phosphate. It participates in carbohydrate degradation; 2-deoxy-D-ribose 1-phosphate degradation; D-glyceraldehyde 3-phosphate and acetaldehyde from 2-deoxy-alpha-D-ribose 1-phosphate: step 1/2. Functionally, isomerase that catalyzes the conversion of deoxy-ribose 1-phosphate (dRib-1-P) and ribose 1-phosphate (Rib-1-P) to deoxy-ribose 5-phosphate (dRib-5-P) and ribose 5-phosphate (Rib-5-P), respectively. The polypeptide is Phosphopentomutase (Yersinia pestis bv. Antiqua (strain Antiqua)).